Consider the following 465-residue polypeptide: MSLEKAQELDTKYPTYKDEFAVPTFKSLGIETSQFNENTDSIYLCGNSLGLMPKSTKQAINDELNAWIERGVESHFNHPGQSEGKTPWVDIDLPLVPLVAPIVGAKENEVAVMGSLTSNLNALLINFYKPKDKRTKILFEKQAFPSDYYAFLNLVKLHGYDESHLVQLKVLPGNTYLTTEQIKKAVDDNIDELAMVCFPGIQYYTGQFFKIEEITNYVKNKGKNEIVVGWDLAHAVGNVPLKLHDWNVDFAAWCSYKYLNSGPGGIAGIYVHEQYTKDNSKTSFSPRLAGWWGNNASDRFKMLEEFDPINSALSYRQSNPSVIDVVAVKSSLELFKKVGGVPKLRKKSIALTQFLQDLLVSSKYYFRSDNDTDRSKIGFTILTPLNQEERGAQLSVLFQPHYDDKQKNIMERVSGYLHNHAIICDERRPDVIRFAPLPLYNTFEETYYAAQRLFEALDKISSEEI.

Residues Leu-116, Thr-117, 144-147 (FPSD), Asp-231, His-234, and Tyr-256 contribute to the pyridoxal 5'-phosphate site. Residue Lys-257 is modified to N6-(pyridoxal phosphate)lysine. Pyridoxal 5'-phosphate contacts are provided by Trp-291 and Asn-319.

It belongs to the kynureninase family. Homodimer. Requires pyridoxal 5'-phosphate as cofactor.

Its subcellular location is the cytoplasm. It catalyses the reaction L-kynurenine + H2O = anthranilate + L-alanine + H(+). The catalysed reaction is 3-hydroxy-L-kynurenine + H2O = 3-hydroxyanthranilate + L-alanine + H(+). It participates in amino-acid degradation; L-kynurenine degradation; L-alanine and anthranilate from L-kynurenine: step 1/1. The protein operates within cofactor biosynthesis; NAD(+) biosynthesis; quinolinate from L-kynurenine: step 2/3. In terms of biological role, catalyzes the cleavage of L-kynurenine (L-Kyn) and L-3-hydroxykynurenine (L-3OHKyn) into anthranilic acid (AA) and 3-hydroxyanthranilic acid (3-OHAA), respectively. In Scheffersomyces stipitis (strain ATCC 58785 / CBS 6054 / NBRC 10063 / NRRL Y-11545) (Yeast), this protein is Kynureninase.